We begin with the raw amino-acid sequence, 254 residues long: Ribosomal RNA small subunit methyltransferase J (254 aa).

Residues 106–107 (RD) and Asp177 contribute to the S-adenosyl-L-methionine site.

This sequence belongs to the methyltransferase superfamily. RsmJ family.

Its subcellular location is the cytoplasm. The enzyme catalyses guanosine(1516) in 16S rRNA + S-adenosyl-L-methionine = N(2)-methylguanosine(1516) in 16S rRNA + S-adenosyl-L-homocysteine + H(+). Functionally, specifically methylates the guanosine in position 1516 of 16S rRNA. The polypeptide is Ribosomal RNA small subunit methyltransferase J (Nitrosococcus oceani (strain ATCC 19707 / BCRC 17464 / JCM 30415 / NCIMB 11848 / C-107)).